The chain runs to 238 residues: Cysteine-rich venom protein pseudechetoxin-like (238 aa).

The N-terminal stretch at methionine 1–glycine 19 is a signal peptide. Positions threonine 20–serine 28 are excised as a propeptide. The SCP domain occupies valine 38 to tyrosine 164. Cystine bridges form between cysteine 75–cysteine 153, cysteine 92–cysteine 165, cysteine 148–cysteine 162, cysteine 184–cysteine 191, cysteine 187–cysteine 196, cysteine 200–cysteine 233, cysteine 209–cysteine 227, and cysteine 218–cysteine 231. In terms of domain architecture, ShKT spans cysteine 200–cysteine 233.

Belongs to the CRISP family. Expressed by the venom gland.

It is found in the secreted. In terms of biological role, blocks olfactory (CNGA2) and retinal (CNGA1) CNG channel currents. Does not affect neither depolarization- nor caffeine-induced contraction of smooth muscle. The polypeptide is Cysteine-rich venom protein pseudechetoxin-like (Oxyuranus scutellatus scutellatus (Australian taipan)).